The following is a 543-amino-acid chain: Zinc finger protein 280B (543 aa).

An N-acetylmethionine modification is found at methionine 1. Over residues 1 to 10 (MEQSCEEEKE) the composition is skewed to acidic residues. Residues 1–23 (MEQSCEEEKEPEPQKNIQETKQV) are disordered. A phosphoserine mark is found at serine 68 and serine 70. A disordered region spans residues 105-138 (SQLESRSTDSPIIIEPLSKPDYRNSSPQVVPNNS). Residues 128 to 138 (NSSPQVVPNNS) are compositionally biased toward low complexity. Residues lysine 173, lysine 247, and lysine 261 each participate in a glycyl lysine isopeptide (Lys-Gly) (interchain with G-Cter in SUMO2) cross-link. 4 consecutive C2H2-type zinc fingers follow at residues 343-366 (TTCQ…ENVH), 373-396 (TVCK…KDHH), 432-454 (LLCP…YRGH), and 460-483 (HQCS…TQCH). Residues 518–543 (ASITVSTSDSEPSLPRSKSKISKKSH) form a disordered region. The segment covering 534–543 (SKSKISKKSH) has biased composition (basic residues).

The protein resides in the nucleus. May function as a transcription factor. The protein is Zinc finger protein 280B (ZNF280B) of Homo sapiens (Human).